Here is a 435-residue protein sequence, read N- to C-terminus: Beta-arrestin arr-1 (435 aa).

Residues 358 to 382 (LTHSKPPESPERTDRGLPSIEATNG) form a disordered region. Residues 362 to 372 (KPPESPERTDR) are compositionally biased toward basic and acidic residues. The Clathrin box motif lies at 390–394 (LIQLH). The short motif at 404-414 (DLIFEDFARMR) is the [DE]-X(1,2)-F-X-X-[FL]-X-X-X-R motif element. Positions 416–435 (HGNDSEDQPSPSANLPPSLL) are disordered. Low complexity predominate over residues 424-435 (PSPSANLPPSLL).

The protein belongs to the arrestin family. As to quaternary structure, component of a complex composed of arr-1, daf-18 and mpz-1. Within the complex, interacts (via C-terminus) with mpz-1 (via PDZ domain) and phosphatase daf-18. May interact (via C-terminus) with clathrin chc-1 and beta-2 adaptin (AP2) apb-1. Expressed in head neurons, nerve ring and ventral nerve cord (at protein level). Expressed in the nervous system including the nerve ring and the ventral and dorsal nerve cords. Highly expressed in amphid chemosensory neurons AWA, AWB, AWC, ADL and ASH, and in hermaphrodite specific neuron HSN. Also expressed in the intestine.

Its subcellular location is the perikaryon. The protein localises to the cell projection. It localises to the dendrite. Functionally, adapter protein required for olfactory adaptation and recovery to volatile odorants, probably by desensitization of G-protein coupled receptors (GPCR). May play a role in clathrin-mediated GPCR endocytosis. Acts as a positive regulator of insulin-like daf-2 signaling pathway probably by forming a complex with mpz-1 and phosphatase daf-18 likely resulting in daf-18 inhibition. Involved in egg-laying. The sequence is that of Beta-arrestin arr-1 from Caenorhabditis elegans.